We begin with the raw amino-acid sequence, 432 residues long: Glial fibrillary acidic protein (432 aa).

The head stretch occupies residues 1 to 72; that stretch reads MERRRITSAA…KETRASERAE (72 aa). Thr-7 bears the Phosphothreonine; by AURKB and ROCK1 mark. Arg-12 carries the post-translational modification Omega-N-methylarginine. Ser-13 carries the phosphoserine; by AURKB and ROCK1 modification. Arg-30 and Arg-36 each carry citrulline. Ser-38 carries the post-translational modification Phosphoserine; by AURKB and ROCK1. One can recognise an IF rod domain in the interval 69 to 377; it reads ERAEMMELND…KLLEGEENRI (309 aa). A coil 1A region spans residues 73–104; the sequence is MMELNDRFASYIEKVRFLEQQNKALAAELNQL. Ser-82 is modified (phosphoserine). The linker 1 stretch occupies residues 105 to 115; that stretch reads RAKEPTKLADV. Thr-110 and Thr-150 each carry phosphothreonine. The interval 116–214 is coil 1B; it reads YQAELRELRL…EEEVRELQEQ (99 aa). Positions 215–230 are linker 12; sequence LARQQVHVELDMAKPD. The interval 231-252 is coil 2A; sequence LTAALKEIRTQYEAMASSNMHE. The tract at residues 253 to 256 is linker 2; it reads AEEW. The coil 2B stretch occupies residues 257 to 377; the sequence is YRSKFADLTD…KLLEGEENRI (121 aa). Citrulline is present on Arg-270. Ser-323 carries the phosphoserine modification. Residues 378 to 432 form a tail region; that stretch reads TIPVQTFSNLQIRETSLDTKSVSEGHLKRNIVVKTVEMRDGEVIKESKQEHKDVM. At Thr-383 the chain carries Phosphothreonine. Ser-385 is modified (phosphoserine). Arg-406 and Arg-416 each carry citrulline.

The protein belongs to the intermediate filament family. Interacts with SYNM. Post-translationally, phosphorylated by PKN1.

It is found in the cytoplasm. GFAP, a class-III intermediate filament, is a cell-specific marker that, during the development of the central nervous system, distinguishes astrocytes from other glial cells. The protein is Glial fibrillary acidic protein (GFAP) of Pongo abelii (Sumatran orangutan).